The primary structure comprises 612 residues: Dihydroxy-acid dehydratase (612 aa).

Aspartate 81 is a Mg(2+) binding site. Cysteine 122 serves as a coordination point for [2Fe-2S] cluster. 2 residues coordinate Mg(2+): aspartate 123 and lysine 124. Residue lysine 124 is modified to N6-carboxylysine. Cysteine 195 provides a ligand contact to [2Fe-2S] cluster. Glutamate 491 is a Mg(2+) binding site. The Proton acceptor role is filled by serine 517.

It belongs to the IlvD/Edd family. In terms of assembly, homodimer. Requires [2Fe-2S] cluster as cofactor. Mg(2+) serves as cofactor.

The enzyme catalyses (2R)-2,3-dihydroxy-3-methylbutanoate = 3-methyl-2-oxobutanoate + H2O. It catalyses the reaction (2R,3R)-2,3-dihydroxy-3-methylpentanoate = (S)-3-methyl-2-oxopentanoate + H2O. The protein operates within amino-acid biosynthesis; L-isoleucine biosynthesis; L-isoleucine from 2-oxobutanoate: step 3/4. Its pathway is amino-acid biosynthesis; L-valine biosynthesis; L-valine from pyruvate: step 3/4. Functionally, functions in the biosynthesis of branched-chain amino acids. Catalyzes the dehydration of (2R,3R)-2,3-dihydroxy-3-methylpentanoate (2,3-dihydroxy-3-methylvalerate) into 2-oxo-3-methylpentanoate (2-oxo-3-methylvalerate) and of (2R)-2,3-dihydroxy-3-methylbutanoate (2,3-dihydroxyisovalerate) into 2-oxo-3-methylbutanoate (2-oxoisovalerate), the penultimate precursor to L-isoleucine and L-valine, respectively. The protein is Dihydroxy-acid dehydratase of Haemophilus influenzae (strain PittGG).